The chain runs to 822 residues: DNA gyrase subunit A (822 aa).

In terms of domain architecture, Topo IIA-type catalytic spans 32-497 (LPDVRDGLKP…QVLSLEDEDL (466 aa)). Y120 functions as the O-(5'-phospho-DNA)-tyrosine intermediate in the catalytic mechanism. The GyrA-box motif lies at 524–530 (QKRGGRG).

It belongs to the type II topoisomerase GyrA/ParC subunit family. As to quaternary structure, heterotetramer, composed of two GyrA and two GyrB chains. In the heterotetramer, GyrA contains the active site tyrosine that forms a transient covalent intermediate with DNA, while GyrB binds cofactors and catalyzes ATP hydrolysis.

The protein resides in the cytoplasm. The catalysed reaction is ATP-dependent breakage, passage and rejoining of double-stranded DNA.. A type II topoisomerase that negatively supercoils closed circular double-stranded (ds) DNA in an ATP-dependent manner to modulate DNA topology and maintain chromosomes in an underwound state. Negative supercoiling favors strand separation, and DNA replication, transcription, recombination and repair, all of which involve strand separation. Also able to catalyze the interconversion of other topological isomers of dsDNA rings, including catenanes and knotted rings. Type II topoisomerases break and join 2 DNA strands simultaneously in an ATP-dependent manner. This is DNA gyrase subunit A from Streptococcus pneumoniae serotype 4 (strain ATCC BAA-334 / TIGR4).